The following is a 453-amino-acid chain: Serine/threonine-protein phosphatase 2A regulatory subunit B'' subunit gamma (453 aa).

2 EF-hand domains span residues 273-308 and 341-376; these read PSAL…TMTN and KEPA…IQEL. Asp-286, Asp-288, Asn-290, Met-292, and Glu-297 together coordinate Ca(2+).

As to quaternary structure, interacts with MCM3AP/GANP, PPP5C, and the phosphatase 2A core enzyme composed of the PPP2CA catalytic subunit and the constant regulatory subunit PPP2R1A. Finds in a complex with ABCB1, TFPI2 and PPP2R3C; leading to the dephosphorylation of ABCB1.

It is found in the nucleus. Its subcellular location is the cytoplasm. Its function is as follows. May regulate MCM3AP phosphorylation through phosphatase recruitment. May act as a negative regulator of ABCB1 expression and function through the dephosphorylation of ABCB1 by TFPI2/PPP2R3C complex. May play a role in the activation-induced cell death of B-cells. The protein is Serine/threonine-protein phosphatase 2A regulatory subunit B'' subunit gamma (PPP2R3C) of Bos taurus (Bovine).